Consider the following 169-residue polypeptide: Peptide deformylase 1 (169 aa).

2 residues coordinate Fe cation: C93 and H135. E136 is an active-site residue. H139 is a Fe cation binding site.

Belongs to the polypeptide deformylase family. Fe(2+) is required as a cofactor.

It carries out the reaction N-terminal N-formyl-L-methionyl-[peptide] + H2O = N-terminal L-methionyl-[peptide] + formate. Its function is as follows. Removes the formyl group from the N-terminal Met of newly synthesized proteins. Requires at least a dipeptide for an efficient rate of reaction. N-terminal L-methionine is a prerequisite for activity but the enzyme has broad specificity at other positions. The chain is Peptide deformylase 1 from Corynebacterium glutamicum (strain ATCC 13032 / DSM 20300 / JCM 1318 / BCRC 11384 / CCUG 27702 / LMG 3730 / NBRC 12168 / NCIMB 10025 / NRRL B-2784 / 534).